The following is a 718-amino-acid chain: GMP synthase [glutamine-hydrolyzing] (718 aa).

Positions 43–247 (VIVILDAGSQ…LIDICGCSAN (205 aa)) constitute a Glutamine amidotransferase type-1 domain. Active-site for GATase activity residues include Cys128, His221, and Glu223. The region spanning 248 to 457 (YTLDDREQQA…LGLSDSLVWR (210 aa)) is the GMPS ATP-PPase domain. An ATP-binding site is contributed by 275 to 281 (SGGVDST).

In terms of assembly, homodimer.

The catalysed reaction is XMP + L-glutamine + ATP + H2O = GMP + L-glutamate + AMP + diphosphate + 2 H(+). The protein operates within purine metabolism; GMP biosynthesis; GMP from XMP (L-Gln route): step 1/1. The polypeptide is GMP synthase [glutamine-hydrolyzing] (guaA) (Dictyostelium discoideum (Social amoeba)).